The chain runs to 675 residues: DNA ligase (675 aa).

Residues 35–39 (DEAYD), 84–85 (SL), and Glu-116 each bind NAD(+). The N6-AMP-lysine intermediate role is filled by Lys-118. NAD(+) contacts are provided by Arg-139, Glu-180, Lys-296, and Lys-320. Zn(2+)-binding residues include Cys-414, Cys-417, Cys-432, and Cys-437. The region spanning 597-675 (PVDAFWNGKT…EREFLERLGM (79 aa)) is the BRCT domain.

Belongs to the NAD-dependent DNA ligase family. LigA subfamily. Requires Mg(2+) as cofactor. The cofactor is Mn(2+).

It catalyses the reaction NAD(+) + (deoxyribonucleotide)n-3'-hydroxyl + 5'-phospho-(deoxyribonucleotide)m = (deoxyribonucleotide)n+m + AMP + beta-nicotinamide D-nucleotide.. DNA ligase that catalyzes the formation of phosphodiester linkages between 5'-phosphoryl and 3'-hydroxyl groups in double-stranded DNA using NAD as a coenzyme and as the energy source for the reaction. It is essential for DNA replication and repair of damaged DNA. The polypeptide is DNA ligase (Syntrophobacter fumaroxidans (strain DSM 10017 / MPOB)).